The primary structure comprises 305 residues: MRLQTIAPAKVNLVLRVGPPRRDGYHGIRSLMVPLDLGDRVDVSVGERAGPVTCRVPGRPELDGADNLAARAAERFRARFGVERTIGIRIAKRIPVTAGLGGGSSDAAAVLRCLARAFGIRDRAALAAIALEVGSDVPFFLGPGPAWAEGRGERLTPADVPPQHLVLVYPDDPALAIRAGEAYRWLDASRQGRRPRLPPRFARFEPSRAGNDLQPPCLLERPPLATLLGLLVGRGATAAIMSGSGPTVFGTFHSRNAAARAARTIAEEVVDRKVMVLAATTVRRHPGVTPWRSPRSASSPSTKRS.

Residue K10 is part of the active site. 95–105 (PVTAGLGGGSS) lines the ATP pocket. D136 is a catalytic residue. The tract at residues 286-305 (PGVTPWRSPRSASSPSTKRS) is disordered. Low complexity predominate over residues 290–305 (PWRSPRSASSPSTKRS).

This sequence belongs to the GHMP kinase family. IspE subfamily.

The enzyme catalyses 4-CDP-2-C-methyl-D-erythritol + ATP = 4-CDP-2-C-methyl-D-erythritol 2-phosphate + ADP + H(+). It participates in isoprenoid biosynthesis; isopentenyl diphosphate biosynthesis via DXP pathway; isopentenyl diphosphate from 1-deoxy-D-xylulose 5-phosphate: step 3/6. Functionally, catalyzes the phosphorylation of the position 2 hydroxy group of 4-diphosphocytidyl-2C-methyl-D-erythritol. The sequence is that of 4-diphosphocytidyl-2-C-methyl-D-erythritol kinase from Anaeromyxobacter sp. (strain Fw109-5).